A 165-amino-acid polypeptide reads, in one-letter code: Protein SprT (165 aa).

The SprT-like domain maps to 20 to 163; the sequence is EKLAQANLKL…RCVHCGEQLV (144 aa). Zn(2+) is bound at residue histidine 78. Residue glutamate 79 is part of the active site. Residue histidine 82 coordinates Zn(2+).

This sequence belongs to the SprT family. It depends on Zn(2+) as a cofactor.

The protein resides in the cytoplasm. This Escherichia coli O127:H6 (strain E2348/69 / EPEC) protein is Protein SprT.